We begin with the raw amino-acid sequence, 447 residues long: tRNA-2-methylthio-N(6)-dimethylallyladenosine synthase (447 aa).

An MTTase N-terminal domain is found at 10 to 128 (KLFCISTYGC…FPEYLHRVLQ (119 aa)). The [4Fe-4S] cluster site is built by Cys-19, Cys-55, Cys-89, Cys-165, Cys-169, and Cys-172. A Radical SAM core domain is found at 151–382 (RKSDVKAFVT…EAINKKVVIK (232 aa)). Residues 384–447 (KEYEGKVVEV…PFSLIGEIVE (64 aa)) enclose the TRAM domain.

The protein belongs to the methylthiotransferase family. MiaB subfamily. As to quaternary structure, monomer. [4Fe-4S] cluster serves as cofactor.

The protein localises to the cytoplasm. It catalyses the reaction N(6)-dimethylallyladenosine(37) in tRNA + (sulfur carrier)-SH + AH2 + 2 S-adenosyl-L-methionine = 2-methylsulfanyl-N(6)-dimethylallyladenosine(37) in tRNA + (sulfur carrier)-H + 5'-deoxyadenosine + L-methionine + A + S-adenosyl-L-homocysteine + 2 H(+). Functionally, catalyzes the methylthiolation of N6-(dimethylallyl)adenosine (i(6)A), leading to the formation of 2-methylthio-N6-(dimethylallyl)adenosine (ms(2)i(6)A) at position 37 in tRNAs that read codons beginning with uridine. This Clostridium perfringens (strain SM101 / Type A) protein is tRNA-2-methylthio-N(6)-dimethylallyladenosine synthase.